The primary structure comprises 161 residues: UPF0262 protein SPOA0072 (161 aa).

The segment at 1 to 21 (MTMSRISHIELDDSNLPPPTP) is disordered.

The protein belongs to the UPF0262 family.

The sequence is that of UPF0262 protein SPOA0072 from Ruegeria pomeroyi (strain ATCC 700808 / DSM 15171 / DSS-3) (Silicibacter pomeroyi).